The chain runs to 1015 residues: Tolloid-like protein 2 (1015 aa).

The first 25 residues, 1–25 (MPRATALGALVSLLLLLPLPRGAGG), serve as a signal peptide directing secretion. Disordered regions lie at residues 24-49 (GGLG…EQQL) and 88-130 (VGAT…TTLL). Residues 26-149 (LGERPDATAD…AKTFSPRVRR (124 aa)) constitute a propeptide that is removed on maturation. Residues 103-113 (SESSPDTTAMD) are compositionally biased toward polar residues. Over residues 115–125 (GTKEAGKDGRE) the composition is skewed to basic and acidic residues. In terms of domain architecture, Peptidase M12A spans 149–349 (RATTSRTERI…AQARKLYKCP (201 aa)). The N-linked (GlcNAc...) asparagine glycan is linked to asparagine 171. Cystine bridges form between cysteine 192/cysteine 348, cysteine 212/cysteine 234, cysteine 214/cysteine 215, and cysteine 351/cysteine 377. Histidine 242 contributes to the Zn(2+) binding site. Residue glutamate 243 is part of the active site. Zn(2+)-binding residues include histidine 246 and histidine 252. CUB domains follow at residues 351-463 (CGET…YEAT) and 464-576 (CGGD…FFKE). Residues asparagine 361 and asparagine 392 are each glycosylated (N-linked (GlcNAc...) asparagine). Cystine bridges form between cysteine 404-cysteine 426, cysteine 464-cysteine 490, cysteine 517-cysteine 539, cysteine 580-cysteine 592, cysteine 588-cysteine 601, cysteine 603-cysteine 616, cysteine 620-cysteine 646, cysteine 673-cysteine 695, cysteine 736-cysteine 747, cysteine 743-cysteine 756, cysteine 758-cysteine 771, and cysteine 776-cysteine 802. Positions 576 to 617 (EVDECSWPDHGGCEHRCVNTLGSYKCACDPGYELAADKKMCE) constitute an EGF-like 1; calcium-binding domain. The region spanning 620–732 (CGGFITKLNG…RGFRAHFFSD (113 aa)) is the CUB 3 domain. N-linked (GlcNAc...) asparagine glycosylation occurs at asparagine 628. One can recognise an EGF-like 2; calcium-binding domain in the interval 732–772 (DKDECAKDNGGCQHECVNTFGSYLCRCRNGYWLHENGHDCK). 2 CUB domains span residues 776–888 (CAHK…HSTE) and 889–1005 (CGGR…YTST). N-linked (GlcNAc...) asparagine glycosylation is present at asparagine 805. Disulfide bonds link cysteine 829-cysteine 851, cysteine 889-cysteine 919, and cysteine 946-cysteine 968. Omega-N-methylarginine is present on residues arginine 963 and arginine 966.

The cofactor is Zn(2+).

The protein resides in the secreted. Functionally, protease which specifically processes pro-lysyl oxidase. Required for the embryonic development. Predominant protease, which in the development, influences dorsal-ventral patterning and skeletogenesis. This is Tolloid-like protein 2 (TLL2) from Homo sapiens (Human).